A 484-amino-acid chain; its full sequence is Fumarate hydratase class II (484 aa).

The segment at 1-22 (MPSILDLPIGTGATGKRKESDS) is disordered. Substrate contacts are provided by residues 110–112 (SGT), 141–144 (HPND), 151–153 (SSN), and threonine 199. Histidine 200 (proton donor/acceptor) is an active-site residue. The active site involves serine 330. Residues serine 331 and 336–338 (KVN) each bind substrate.

The protein belongs to the class-II fumarase/aspartase family. Fumarase subfamily. In terms of assembly, homotetramer.

Its subcellular location is the cytoplasm. The catalysed reaction is (S)-malate = fumarate + H2O. The protein operates within carbohydrate metabolism; tricarboxylic acid cycle; (S)-malate from fumarate: step 1/1. Its function is as follows. Involved in the TCA cycle. Catalyzes the stereospecific interconversion of fumarate to L-malate. In Methanosarcina acetivorans (strain ATCC 35395 / DSM 2834 / JCM 12185 / C2A), this protein is Fumarate hydratase class II.